The primary structure comprises 330 residues: Aspartate--ammonia ligase (330 aa).

Belongs to the class-II aminoacyl-tRNA synthetase family. AsnA subfamily. As to quaternary structure, homodimer.

It localises to the cytoplasm. It carries out the reaction L-aspartate + NH4(+) + ATP = L-asparagine + AMP + diphosphate + H(+). Its pathway is amino-acid biosynthesis; L-asparagine biosynthesis; L-asparagine from L-aspartate (ammonia route): step 1/1. The chain is Aspartate--ammonia ligase from Salmonella typhimurium (strain LT2 / SGSC1412 / ATCC 700720).